The chain runs to 1717 residues: PH domain leucine-rich repeat-containing protein phosphatase 1 (1717 aa).

M1 is subject to N-acetylmethionine. Disordered regions lie at residues 1 to 25 (MEPA…SAPA), 41 to 118 (LAAA…GANS), 136 to 156 (AASS…GAAG), and 252 to 470 (PGAA…PPPT). The span at 98–110 (APQPIAGGAAPVP) shows a compositional bias: low complexity. The span at 262–274 (EPPPEAGPRLAPP) shows a compositional bias: pro residues. Composition is skewed to low complexity over residues 313–325 (SRRA…DSSP) and 333–345 (PVSS…PVVS). S317 carries the post-translational modification Phosphoserine. Polar residues-rich tracts occupy residues 346–358 (DTES…SAES) and 408–417 (QTASSPQPQQ). S412 carries the post-translational modification Phosphoserine. The PH domain occupies 536–636 (RIQLSGMYNV…WLRQVSKVAS (101 aa)). LRR repeat units follow at residues 638–659 (RISS…LFYS), 661–682 (DLTH…PAAR), 692–712 (KLKS…AVCS), 715–736 (TLAE…VGVM), 738–760 (NLQT…ENMK), 761–783 (QLSY…EKLT), 784–804 (AVDK…QALR), 808–831 (HIKH…DFLQ), 832–853 (HVTQ…IFNN), 873–894 (FLKA…PVPN), 895–916 (YLSY…VCES), 918–939 (KLEV…LFCN), 941–962 (SLRK…LERT), 963–984 (SVEV…LLMK), 987–1008 (SLRF…TLSE), 1013–1033 (ILQE…PLLT), 1037–1058 (HLKI…KMAK), 1061–1082 (ELEE…IMNC), 1084–1105 (RMHT…MQLP), 1106–1127 (EIKC…ENLP), and 1129–1150 (KLQE…TLEL). Residues 1076–1205 (PTTIMNCRRM…NNFCDNREAL (130 aa)) are interaction with NHERF1. The PPM-type phosphatase domain occupies 1175–1422 (SHGYTEASGV…DSISAVVVQL (248 aa)). Mn(2+) is bound by residues D1210, G1211, K1374, and D1413. 2 disordered regions span residues 1458–1510 (DRPS…SPAY) and 1673–1717 (EVKE…DTPL). Positions 1468–1489 (SSSSGMASEISSELSTSEMSSE) are enriched in low complexity. A PDZ-binding; required for interaction with NHERF1 motif is present at residues 1715–1717 (TPL).

As to quaternary structure, interacts with the nucleotide free form of K-Ras (KRAS) via its LRR repeats. Interacts with AKT2, AKT3, PRKCB isoform beta-II, STK4, RPS6KB1, RAF1. Isoform 1 (predominantly) and isoform 2 interact with BRAP. Interacts with FKBP5; FKBP5 acts as a scaffold for PHLPP1 and Akt. Interacts with SCRIB; SCRIB acts as a scaffold for PHLPP1 and Akt. Interacts with NHERF1; NHERF1 scaffolds a heterotrimeric complex with PTEN at the plasma membrane. Interacts with WDR48 and USP12. Mn(2+) is required as a cofactor. In colorectal cancer tissue, expression is highest in the surface epithelium of normal colonic mucosa adjacent to the cancer tissue but is largely excluded from the crypt bases. Expression is lost or significantly decreased in 78% of tested tumors (at protein level). Ubiquitously expressed in non-cancerous tissues.

The protein resides in the cytoplasm. Its subcellular location is the membrane. It is found in the nucleus. The protein localises to the cell membrane. It carries out the reaction O-phospho-L-seryl-[protein] + H2O = L-seryl-[protein] + phosphate. The catalysed reaction is O-phospho-L-threonyl-[protein] + H2O = L-threonyl-[protein] + phosphate. With respect to regulation, insensitive to okadaic acid. Deubiquitination by WDR48-USP12 complex positively regulates PHLPP1 stability. In terms of biological role, protein phosphatase involved in regulation of Akt and PKC signaling. Mediates dephosphorylation in the C-terminal domain hydrophobic motif of members of the AGC Ser/Thr protein kinase family; specifically acts on 'Ser-473' of AKT2 and AKT3, 'Ser-660' of PRKCB and 'Ser-657' of PRKCA. Isoform 2 seems to have a major role in regulating Akt signaling in hippocampal neurons. Akt regulates the balance between cell survival and apoptosis through a cascade that primarily alters the function of transcription factors that regulate pro- and antiapoptotic genes. Dephosphorylation of 'Ser-473' of Akt triggers apoptosis and suppression of tumor growth. Dephosphorylation of PRKCA and PRKCB leads to their destabilization and degradation. Dephosphorylates STK4 on 'Thr-387' leading to STK4 activation and apoptosis. Dephosphorylates RPS6KB1 and is involved in regulation of cap-dependent translation. Inhibits cancer cell proliferation and may act as a tumor suppressor. Dephosphorylates RAF1 inhibiting its kinase activity. May act as a negative regulator of K-Ras signaling in membrane rafts. Involved in the hippocampus-dependent long-term memory formation. Involved in circadian control by regulating the consolidation of circadian periodicity after resetting. Involved in development and function of regulatory T-cells. This Homo sapiens (Human) protein is PH domain leucine-rich repeat-containing protein phosphatase 1 (PHLPP1).